A 91-amino-acid chain; its full sequence is Sec-independent protein translocase protein TatA (91 aa).

A helical transmembrane segment spans residues 1-21 (MGIFDWKHWIVILIVVVLVFG). The disordered stretch occupies residues 41–91 (KAMNDDDKPAEQPAPQPQQAQPAPQGSPLNQPHTIDAQAHKVDEPIRKDQV). Low complexity predominate over residues 51–64 (EQPAPQPQQAQPAP). Positions 78 to 91 (QAHKVDEPIRKDQV) are enriched in basic and acidic residues.

It belongs to the TatA/E family. The Tat system comprises two distinct complexes: a TatABC complex, containing multiple copies of TatA, TatB and TatC subunits, and a separate TatA complex, containing only TatA subunits. Substrates initially bind to the TatABC complex, which probably triggers association of the separate TatA complex to form the active translocon.

The protein localises to the cell inner membrane. Part of the twin-arginine translocation (Tat) system that transports large folded proteins containing a characteristic twin-arginine motif in their signal peptide across membranes. TatA could form the protein-conducting channel of the Tat system. In Pseudomonas syringae pv. syringae (strain B728a), this protein is Sec-independent protein translocase protein TatA.